A 182-amino-acid polypeptide reads, in one-letter code: Epididymal-specific lipocalin-10 (182 aa).

An N-terminal signal peptide occupies residues 1–19 (MKLEMALSIALALAVVSWT). N-linked (GlcNAc...) asparagine glycosylation is found at Asn31 and Asn144. Cys85 and Cys176 are oxidised to a cystine. Position 165 is an N6-acetyllysine (Lys165).

The protein belongs to the calycin superfamily. Lipocalin family. Expressed in epididymis.

It localises to the secreted. May play a role in male fertility. May act as a retinoid carrier protein within the epididymis. The chain is Epididymal-specific lipocalin-10 (Lcn10) from Mus musculus (Mouse).